We begin with the raw amino-acid sequence, 539 residues long: Acid-sensing ion channel 4 (539 aa).

The Cytoplasmic segment spans residues 1–68 (MPIEIVCKIK…GPGPHGLRRT (68 aa)). Residues 69–89 (LWALALLTSLAAFLYQAASLA) form a helical membrane-spanning segment. Topologically, residues 90-438 (RGYLTRPHLV…EQQAAYGLSA (349 aa)) are extracellular. Cystine bridges form between cysteine 118–cysteine 202 and cysteine 180–cysteine 187. Asparagine 191, asparagine 243, asparagine 341, and asparagine 376 each carry an N-linked (GlcNAc...) asparagine glycan. 5 disulfide bridges follow: cysteine 296-cysteine 375, cysteine 318-cysteine 371, cysteine 322-cysteine 369, cysteine 331-cysteine 353, and cysteine 333-cysteine 345. The helical transmembrane segment at 439–459 (LLGDLGGQMGLFIGASILTLL) threads the bilayer. The GAS motif; ion selectivity filter motif lies at 452–454 (GAS). The Cytoplasmic portion of the chain corresponds to 460-539 (EILDYIYEVS…PGSLFEDFAC (80 aa)). A disordered region spans residues 500-531 (KEQSPCPSRGRAEGGGASSLLPNHHHPHGPPG).

The protein belongs to the amiloride-sensitive sodium channel (TC 1.A.6) family. ASIC4 subfamily. In terms of assembly, homotrimer. Heterotrimer; with other ASIC proteins producing functional channels.

The protein localises to the cell membrane. In terms of biological role, does not exhibit measurable stand-alone pH-gated sodium channel activity but may form pH-gated heterotrimeric sodium channels. Its activity could also depend on alternative gating mechanisms. In Mus musculus (Mouse), this protein is Acid-sensing ion channel 4.